A 68-amino-acid polypeptide reads, in one-letter code: DNA-directed RNA polymerase subunit omega (68 aa).

Belongs to the RNA polymerase subunit omega family. As to quaternary structure, the RNAP catalytic core consists of 2 alpha, 1 beta, 1 beta' and 1 omega subunit. When a sigma factor is associated with the core the holoenzyme is formed, which can initiate transcription.

The enzyme catalyses RNA(n) + a ribonucleoside 5'-triphosphate = RNA(n+1) + diphosphate. In terms of biological role, promotes RNA polymerase assembly. Latches the N- and C-terminal regions of the beta' subunit thereby facilitating its interaction with the beta and alpha subunits. The chain is DNA-directed RNA polymerase subunit omega from Alkaliphilus metalliredigens (strain QYMF).